Consider the following 530-residue polypeptide: MPSNMKQFCKISVWLQQHDPDLLEIINNLCMLGNLSAAKYKHGVTFIYPKQAKIRDEIKKHAYSNDPSQAIKTLESLILPFYIPTPAEFTGEIGSYTGVKLEVEKTEANKVILKNGEAVLIPAADFKPFPDRRLAVWIMESGSMPLEGPPYKRKKEGGGNDPPVPKHISPYTPRTRIAIEVEKAFDDCMRQNWCSVNNPYLAKSVSLLSFLSLNHPTEFIKVLPLIDFDPLVTFYLLLEPYKTHGDDFLIPETVLFGPTGWNGTDLYQSAMLEFKKFFTQITRQTFMDIADTATKEVDVPICYSDPETVHSYANHVRTEILHHNMVNKVTTPNLVVQAYNELEQTNTIRHYGPIFPESTINALRFWKKLWQDEQRFVIHGLHRTLMDQPTYETSEFAEIVRNLRFSRPGNNYINELNITSPAMYGDKHTTGDIAPNDRFAMLVAFINSTDFLYTAIPEEKVGGNDTQTSSLTDLVPTRLHSFLNHNLSKLKILNRAQQTVRNILSNDCLNQLKHYVKHTGKNEILKLLQD.

Belongs to the asfivirus polyprotein pp62 family. Monomer. Predominantly exists as a monomer, with very little dimers. Homodimerization seems to be linked to low pH. As to quaternary structure, homodimer; disulfide-linked. Homotrimer; disulfide-linked. Homohexamer. Monoubiquitinated in vitro by viral UBCv1. Post-translationally, specific enzymatic cleavages in vivo yield mature proteins.

Its subcellular location is the host cytoplasm. The protein localises to the host perinuclear region. The protein resides in the virion. Its function is as follows. Essential for the correct assembly and maturation of the core of the virion. Component of the core shell. Binds to phosphatidylserine, which may enable the core shell binding with the inner membrane. Functionally, component of the core shell. Binds to phosphatidylserine and DNA, which may link the core shell to the inner membrane and to the viral nucleoid. In terms of biological role, component of the core shell. The sequence is that of Polyprotein pp62 from African swine fever virus (isolate Tick/Malawi/Lil 20-1/1983) (ASFV).